Here is a 314-residue protein sequence, read N- to C-terminus: tRNA dimethylallyltransferase 1 (314 aa).

Residue 17 to 24 (GPTAAGKT) participates in ATP binding. 19–24 (TAAGKT) provides a ligand contact to substrate. An interaction with substrate tRNA region spans residues 42–45 (DSRQ).

The protein belongs to the IPP transferase family. In terms of assembly, monomer. It depends on Mg(2+) as a cofactor.

It carries out the reaction adenosine(37) in tRNA + dimethylallyl diphosphate = N(6)-dimethylallyladenosine(37) in tRNA + diphosphate. Its function is as follows. Catalyzes the transfer of a dimethylallyl group onto the adenine at position 37 in tRNAs that read codons beginning with uridine, leading to the formation of N6-(dimethylallyl)adenosine (i(6)A). The sequence is that of tRNA dimethylallyltransferase 1 from Syntrophotalea carbinolica (strain DSM 2380 / NBRC 103641 / GraBd1) (Pelobacter carbinolicus).